We begin with the raw amino-acid sequence, 279 residues long: Shikimate dehydrogenase (NADP(+)) (279 aa).

Shikimate contacts are provided by residues 21 to 23 and T68; that span reads SKS. Residue K72 is the Proton acceptor of the active site. NADP(+) is bound at residue E84. 2 residues coordinate shikimate: N93 and D109. Residues 133-137, 157-162, and M220 each bind NADP(+); these read GAGGA and NRTQAK. Residue Y222 coordinates shikimate. G244 contacts NADP(+).

It belongs to the shikimate dehydrogenase family. As to quaternary structure, homodimer.

It carries out the reaction shikimate + NADP(+) = 3-dehydroshikimate + NADPH + H(+). The protein operates within metabolic intermediate biosynthesis; chorismate biosynthesis; chorismate from D-erythrose 4-phosphate and phosphoenolpyruvate: step 4/7. Its function is as follows. Involved in the biosynthesis of the chorismate, which leads to the biosynthesis of aromatic amino acids. Catalyzes the reversible NADPH linked reduction of 3-dehydroshikimate (DHSA) to yield shikimate (SA). This is Shikimate dehydrogenase (NADP(+)) from Shewanella halifaxensis (strain HAW-EB4).